The primary structure comprises 286 residues: Main hemagglutinin component type C (286 aa).

Residues Ser2–Asn55 form a 1-alpha repeat. Ricin B-type lectin domains are found at residues Asn12–Ser140 and Asp180–Asn284. A 1-beta repeat occupies Lys56–Ile100. The stretch at Ser101–Asn148 is one 1-gamma repeat. Residues Asn149–Thr193 form a 2-alpha repeat. The interval Asn167–Arg183 is sugar-binding site 1. The stretch at Lys194–Asp239 is one 2-beta repeat. One copy of the 2-gamma repeat lies at Ala240–Ile286. Residues Asp256–Gln279 are sugar-binding site 2.

In terms of assembly, botulinum toxins are produced as progenitor toxins of large molecular sizes of 12S (M toxin) and 16S (L toxin). M toxin consists of a non-toxic, non-hemagglutinin component (NTNHA) and the neurotoxin. L toxin consists of the M toxin and the 3 subcomponents of hemagglutinin (HA). HA is composed of subcomponents of 70, 33, and 17 kDa. The 70 kDa subcomponent undergoes proteolytic processing and is split into HA-55 (also called HA-53 and HA3b) and HA-22-23 (also called HA3a). The stoichiometry of the whole complex has been modeled as one BoNT/C, one NTNHA, three HA-70, six HA-33 and three HA-17.

It is found in the secreted. In terms of biological role, agglutinates human erythrocytes. The hemagglutinin (HA) component of the progenitor toxin protects the structural integrity of botulinum neurotoxin; may increase internalization of the neurotoxin into the bloodstream of the host. The hemagglutinin (HA) component is involved in binding to the upper small intestine through interactions with glycolipids and glycoproteins containing sialic acid moieties. Binds galactose or oligosaccharides with galactose at their non-reducing end. Binds eukaryotic host mucins; binding is inhibited by N-acetyl-beta-neuraminic acid, N-acetyl-D-galactosamine, galactose, and methyl N-acetyl-beta-neuraminic acid. Binds N-acetyl-beta-neuraminic acid, N-acetyl-D-galactosamine and galactose (but not glucose) via 2 sites. This chain is Main hemagglutinin component type C, found in Clostridium botulinum C (Clostridium botulinum C bacteriophage).